Here is a 513-residue protein sequence, read N- to C-terminus: ATP synthase subunit alpha (513 aa).

Residue 169–176 participates in ATP binding; the sequence is GDRQCGKT.

The protein belongs to the ATPase alpha/beta chains family. F-type ATPases have 2 components, CF(1) - the catalytic core - and CF(0) - the membrane proton channel. CF(1) has five subunits: alpha(3), beta(3), gamma(1), delta(1), epsilon(1). CF(0) has three main subunits: a(1), b(2) and c(9-12). The alpha and beta chains form an alternating ring which encloses part of the gamma chain. CF(1) is attached to CF(0) by a central stalk formed by the gamma and epsilon chains, while a peripheral stalk is formed by the delta and b chains.

It localises to the cell inner membrane. The enzyme catalyses ATP + H2O + 4 H(+)(in) = ADP + phosphate + 5 H(+)(out). Produces ATP from ADP in the presence of a proton gradient across the membrane. The alpha chain is a regulatory subunit. This chain is ATP synthase subunit alpha, found in Alteromonas mediterranea (strain DSM 17117 / CIP 110805 / LMG 28347 / Deep ecotype).